A 153-amino-acid chain; its full sequence is Small ribosomal subunit protein bS6 (153 aa).

The disordered stretch occupies residues 94-153 (EAHEEGPSAMMQKRDRDDRPRRDGDRPDRGDRGDRGDRGPREGGRESFGDRPRRPREDRA).

Belongs to the bacterial ribosomal protein bS6 family.

Binds together with bS18 to 16S ribosomal RNA. The protein is Small ribosomal subunit protein bS6 of Allorhizobium ampelinum (strain ATCC BAA-846 / DSM 112012 / S4) (Agrobacterium vitis (strain S4)).